The primary structure comprises 74 residues: Omega-conotoxin-like PuIIA (74 aa).

The N-terminal stretch at 1–22 (MKLTCVVIVAVLFLTACQLITA) is a signal peptide. A propeptide spanning residues 23–46 (ETYSRGEQKHRALSSTDKNSKLTR) is cleaved from the precursor. Cystine bridges form between Cys-48/Cys-62, Cys-55/Cys-66, and Cys-61/Cys-73.

This sequence belongs to the conotoxin O1 superfamily. Expressed by the venom duct.

The protein resides in the secreted. Its function is as follows. Omega-conotoxins act at presynaptic membranes, they bind and block voltage-gated calcium channels (Cav). The chain is Omega-conotoxin-like PuIIA from Conus pulicarius (Flea-bitten cone).